A 463-amino-acid chain; its full sequence is Phosphomethylpyrimidine synthase (463 aa).

Substrate is bound by residues asparagine 80, methionine 109, tyrosine 138, histidine 173, 193–195, 234–237, and glutamate 273; these read SRG and DGLR. Position 277 (histidine 277) interacts with Zn(2+). Substrate is bound at residue tyrosine 300. Zn(2+) is bound at residue histidine 341. Residues cysteine 421, cysteine 424, and cysteine 429 each coordinate [4Fe-4S] cluster.

It belongs to the ThiC family. Homodimer. Requires [4Fe-4S] cluster as cofactor.

It catalyses the reaction 5-amino-1-(5-phospho-beta-D-ribosyl)imidazole + S-adenosyl-L-methionine = 4-amino-2-methyl-5-(phosphooxymethyl)pyrimidine + CO + 5'-deoxyadenosine + formate + L-methionine + 3 H(+). The protein operates within cofactor biosynthesis; thiamine diphosphate biosynthesis. Catalyzes the synthesis of the hydroxymethylpyrimidine phosphate (HMP-P) moiety of thiamine from aminoimidazole ribotide (AIR) in a radical S-adenosyl-L-methionine (SAM)-dependent reaction. This chain is Phosphomethylpyrimidine synthase, found in Anaeromyxobacter dehalogenans (strain 2CP-1 / ATCC BAA-258).